The sequence spans 1385 residues: DNA-directed RNA polymerase subunit beta'' (1385 aa).

Cys-220, Cys-293, Cys-300, and Cys-303 together coordinate Zn(2+).

This sequence belongs to the RNA polymerase beta' chain family. RpoC2 subfamily. In terms of assembly, in plastids the minimal PEP RNA polymerase catalytic core is composed of four subunits: alpha, beta, beta', and beta''. When a (nuclear-encoded) sigma factor is associated with the core the holoenzyme is formed, which can initiate transcription. The cofactor is Zn(2+).

The protein localises to the plastid. Its subcellular location is the chloroplast. It catalyses the reaction RNA(n) + a ribonucleoside 5'-triphosphate = RNA(n+1) + diphosphate. DNA-dependent RNA polymerase catalyzes the transcription of DNA into RNA using the four ribonucleoside triphosphates as substrates. This chain is DNA-directed RNA polymerase subunit beta'', found in Aethionema cordifolium (Lebanon stonecress).